A 591-amino-acid polypeptide reads, in one-letter code: A-type ATP synthase subunit A (591 aa).

233–240 (GPFGSGKT) is a binding site for ATP.

It belongs to the ATPase alpha/beta chains family. In terms of assembly, has multiple subunits with at least A(3), B(3), C, D, E, F, H, I and proteolipid K(x).

The protein localises to the cell membrane. It catalyses the reaction ATP + H2O + 4 H(+)(in) = ADP + phosphate + 5 H(+)(out). Its function is as follows. Component of the A-type ATP synthase that produces ATP from ADP in the presence of a proton gradient across the membrane. The A chain is the catalytic subunit. The sequence is that of A-type ATP synthase subunit A from Metallosphaera sedula (strain ATCC 51363 / DSM 5348 / JCM 9185 / NBRC 15509 / TH2).